The following is a 118-amino-acid chain: Ribosome-binding factor A (118 aa).

Belongs to the RbfA family. As to quaternary structure, monomer. Binds 30S ribosomal subunits, but not 50S ribosomal subunits or 70S ribosomes.

The protein localises to the cytoplasm. Its function is as follows. One of several proteins that assist in the late maturation steps of the functional core of the 30S ribosomal subunit. Associates with free 30S ribosomal subunits (but not with 30S subunits that are part of 70S ribosomes or polysomes). Required for efficient processing of 16S rRNA. May interact with the 5'-terminal helix region of 16S rRNA. This Bacillus cereus (strain B4264) protein is Ribosome-binding factor A.